Reading from the N-terminus, the 267-residue chain is Extensin (267 aa).

The tract at residues 1–267 is disordered; it reads MCPAFSIFFN…HTPSPPPPYY (267 aa). 13 consecutive repeats follow at residues 18 to 33, 34 to 54, 55 to 70, 71 to 91, 92 to 107, 108 to 128, 129 to 144, 145 to 160, 161 to 179, 180 to 195, 196 to 211, 212 to 232, and 233 to 253; these read PPTY…PKPT and PPTY…YTPT. Positions 18–253 are highly repetitive; that stretch reads PPTYTPSPKP…ATKPPTYTPT (236 aa). Residues 20–267 are compositionally biased toward pro residues; it reads TYTPSPKPPT…HTPSPPPPYY (248 aa). The segment at 261–265 is extensin repetitive element; it reads SPPPP.

Hydroxylated on proline residues in the S-P-P-P-P repeat. In terms of processing, O-glycosylated on hydroxyprolines. As to expression, mainly in the coleoptile node and root tip.

Its subcellular location is the secreted. It localises to the primary cell wall. In terms of biological role, structural component in primary cell wall. The chain is Extensin (HRGP) from Zea mays (Maize).